We begin with the raw amino-acid sequence, 277 residues long: Phosphatidylglycerol--prolipoprotein diacylglyceryl transferase (277 aa).

4 helical membrane passes run 16–36 (LGPIVIRWYALAYLAGFLFGW), 58–78 (FLTWAIVGVLLGGRLGFVLFY), 93–113 (IWSGGMSFHGGLTGIVAAILL), and 119–139 (GFSPFALGDLVAVAGPVGLFL). R141 provides a ligand contact to a 1,2-diacyl-sn-glycero-3-phospho-(1'-sn-glycerol). 3 helical membrane passes run 182-202 (AALEGLVLFAVLAWLASKPAV), 207-227 (GTLSGTFLVGYGIARILGEVF), and 239-259 (FGVTMGQILSVPMVLIGLWIL).

Belongs to the Lgt family.

Its subcellular location is the cell inner membrane. It carries out the reaction L-cysteinyl-[prolipoprotein] + a 1,2-diacyl-sn-glycero-3-phospho-(1'-sn-glycerol) = an S-1,2-diacyl-sn-glyceryl-L-cysteinyl-[prolipoprotein] + sn-glycerol 1-phosphate + H(+). The protein operates within protein modification; lipoprotein biosynthesis (diacylglyceryl transfer). Its function is as follows. Catalyzes the transfer of the diacylglyceryl group from phosphatidylglycerol to the sulfhydryl group of the N-terminal cysteine of a prolipoprotein, the first step in the formation of mature lipoproteins. This is Phosphatidylglycerol--prolipoprotein diacylglyceryl transferase from Rhodospirillum centenum (strain ATCC 51521 / SW).